The sequence spans 372 residues: UDP-N-acetylglucosamine--N-acetylmuramyl-(pentapeptide) pyrophosphoryl-undecaprenol N-acetylglucosamine transferase (372 aa).

UDP-N-acetyl-alpha-D-glucosamine contacts are provided by residues 21 to 23, Asn135, Arg172, Ser206, and Gln303; that span reads TAG.

Belongs to the glycosyltransferase 28 family. MurG subfamily.

It is found in the cell membrane. The enzyme catalyses di-trans,octa-cis-undecaprenyl diphospho-N-acetyl-alpha-D-muramoyl-L-alanyl-D-glutamyl-meso-2,6-diaminopimeloyl-D-alanyl-D-alanine + UDP-N-acetyl-alpha-D-glucosamine = di-trans,octa-cis-undecaprenyl diphospho-[N-acetyl-alpha-D-glucosaminyl-(1-&gt;4)]-N-acetyl-alpha-D-muramoyl-L-alanyl-D-glutamyl-meso-2,6-diaminopimeloyl-D-alanyl-D-alanine + UDP + H(+). It participates in cell wall biogenesis; peptidoglycan biosynthesis. In terms of biological role, cell wall formation. Catalyzes the transfer of a GlcNAc subunit on undecaprenyl-pyrophosphoryl-MurNAc-pentapeptide (lipid intermediate I) to form undecaprenyl-pyrophosphoryl-MurNAc-(pentapeptide)GlcNAc (lipid intermediate II). The chain is UDP-N-acetylglucosamine--N-acetylmuramyl-(pentapeptide) pyrophosphoryl-undecaprenol N-acetylglucosamine transferase from Paenarthrobacter aurescens (strain TC1).